The following is a 952-amino-acid chain: Valine--tRNA ligase (952 aa).

The 'HIGH' region signature appears at 45–55; sequence PNVTGSLHMGH. The 'KMSKS' region motif lies at 571–575; that stretch reads KMSKS. ATP is bound at residue Lys574. Residues 894 to 950 are a coiled coil; that stretch reads KEIAKADADIARVDLKLADQNFIANAPGEIVEDEKEKREAAAARKAKFVEALERLKA.

This sequence belongs to the class-I aminoacyl-tRNA synthetase family. ValS type 1 subfamily. As to quaternary structure, monomer.

It is found in the cytoplasm. It carries out the reaction tRNA(Val) + L-valine + ATP = L-valyl-tRNA(Val) + AMP + diphosphate. In terms of biological role, catalyzes the attachment of valine to tRNA(Val). As ValRS can inadvertently accommodate and process structurally similar amino acids such as threonine, to avoid such errors, it has a 'posttransfer' editing activity that hydrolyzes mischarged Thr-tRNA(Val) in a tRNA-dependent manner. The chain is Valine--tRNA ligase from Nitrobacter winogradskyi (strain ATCC 25391 / DSM 10237 / CIP 104748 / NCIMB 11846 / Nb-255).